A 192-amino-acid chain; its full sequence is Cytidylate kinase (192 aa).

An ATP-binding site is contributed by 12 to 20 (GLAGSGTTT).

This sequence belongs to the cytidylate kinase family. Type 2 subfamily.

The protein localises to the cytoplasm. The enzyme catalyses CMP + ATP = CDP + ADP. It catalyses the reaction dCMP + ATP = dCDP + ADP. The sequence is that of Cytidylate kinase (cmk) from Pyrococcus horikoshii (strain ATCC 700860 / DSM 12428 / JCM 9974 / NBRC 100139 / OT-3).